The sequence spans 73 residues: Ocellatin-PT8 (73 aa).

Positions 1–22 (MAFLKKSLFLVLFLGLVSLSIC) are cleaved as a signal peptide. Positions 23-39 (DEEKRQDEDDDDDDDEE) are excised as a propeptide.

In terms of tissue distribution, expressed by the skin glands.

It localises to the secreted. Has antibacterial activity against Gram-negative bacteria E.coli ATCC 25922 (MIC=60 uM), K.pneumoniae ATCC 700603 (MIC=240 uM) and S.choleraesuis ATCC 14028 (MIC=240 uM) and against Gram-positive bacterium S.aureus ATCC 29313 (MIC=240 uM). Shows no hemolytic activity and no cytotoxicity. The polypeptide is Ocellatin-PT8 (Leptodactylus pustulatus (Ceara white-lipped frog)).